Here is a 303-residue protein sequence, read N- to C-terminus: GTPase Era (303 aa).

The 168-residue stretch at 7-174 (KSGFVAILGR…IDTLSEKLDE (168 aa)) folds into the Era-type G domain. Residues 15–22 (GRPNVGKS) are G1. 15-22 (GRPNVGKS) lines the GTP pocket. The segment at 41 to 45 (QTTRN) is G2. A G3 region spans residues 62–65 (DTPG). Residues 62-66 (DTPGI) and 124-127 (NKID) each bind GTP. The interval 124 to 127 (NKID) is G4. The G5 stretch occupies residues 153 to 155 (ISA). Positions 205–283 (TREEVPHSIA…YLETWVKIKN (79 aa)) constitute a KH type-2 domain.

This sequence belongs to the TRAFAC class TrmE-Era-EngA-EngB-Septin-like GTPase superfamily. Era GTPase family. Monomer.

The protein localises to the cytoplasm. It is found in the cell membrane. Its function is as follows. An essential GTPase that binds both GDP and GTP, with rapid nucleotide exchange. Plays a role in 16S rRNA processing and 30S ribosomal subunit biogenesis and possibly also in cell cycle regulation and energy metabolism. The protein is GTPase Era of Lactococcus lactis subsp. lactis (strain IL1403) (Streptococcus lactis).